The following is a 512-amino-acid chain: Tyrosine-protein kinase Lyn (512 aa).

Positions 1 to 62 are disordered; sequence MGCIKSKGKD…GQRFQTKDPE (62 aa). Gly-2 carries N-myristoyl glycine lipidation. Cys-3 is lipidated: S-palmitoyl cysteine. Phosphoserine occurs at positions 11 and 13. The region spanning 63-123 is the SH3 domain; sequence EQGDIVVALY…PSNYVAKLNT (61 aa). The SH2 domain occupies 129–226; it reads WFFKDITRKD…GLCRRLEKAC (98 aa). Tyr-193 bears the Phosphotyrosine mark. Residue Ser-228 is modified to Phosphoserine. Residues 247–501 enclose the Protein kinase domain; that stretch reads IKLVKRLGAG…YLQSVLDDFY (255 aa). Residues 253 to 261 and Lys-275 each bind ATP; that span reads LGAGQFGEV. A phosphotyrosine mark is found at Tyr-306 and Tyr-316. Asp-367 acts as the Proton acceptor in catalysis. At Tyr-397 the chain carries Phosphotyrosine; by autocatalysis. 2 positions are modified to phosphotyrosine: Tyr-460 and Tyr-473. Phosphotyrosine; by autocatalysis, CSK and MATK is present on Tyr-508.

Belongs to the protein kinase superfamily. Tyr protein kinase family. SRC subfamily. In terms of assembly, interacts with TEC. Interacts (via SH2 domain) with FLT3 (tyrosine phosphorylated). Interacts with LIME1 and with CD79A upon activation of the B-cell antigen receptor. Interacts with the B-cell receptor complex. Interacts with phosphorylated THEMIS2. Interacts with EPOR. Interacts with MS4A2/FCER1B. Interaction (via the SH2 and SH3 domains) with MUC1 is stimulated by IL7 and the subsequent phosphorylation increases the binding between MUC1 and CTNNB1/beta-catenin. Interacts with ADAM15. Interacts with NDFIP2 and more weakly with NDFIP1. Interacts with FASLG. Interacts with KIT. Interacts with HCLS1. Interacts with FCGR2B. Interacts with FCGR1A; the interaction may be indirect. Interacts with CD19, CD22, CD79A and CD79B. Interacts (via SH3 domain) with CBLC, PPP1R15A and PDE4A. Interacts with TGFB1I1. Interacts (via SH3 domain) with PIK3R1, the regulatory subunit of phosphatidylinositol 3-kinase; this interaction enhances phosphatidylinositol 3-kinase activity. Interacts with CSF2RB, the common subunit of the IL3, IL5 and CSF2 receptors. Interacts with PAG1; identified in a complex with PAG1 and STAT3. Interacts with ABL1. Interacts with PTPN6/SHP-1. Interacts (via SH3 domain) with SCIMP (via proline-rich region). This interaction facilitates the phosphorylation of SCIMP on 'Tyr-107', which enhances binding of SCIMP to TLR4, and consequently the phosphorylation of TLR4 in response to stimulation by lipopolysaccharide in macrophages. Interacts with LPXN (via LD motif 3) and the interaction is induced upon B-cell antigen receptor (BCR) activation. Interacts (via SH3-domain) with ANKRD54 (via ankyrin repeat region) in an activation-independent status of LYN. Forms a multiprotein complex with ANKRD54 and HCLS1. Interacts (via SH2 and SH3 domains) with UNC119; leading to LYN activation. Interacts with CD36. Interacts with LYN. Interacts with SKAP1 and FYB1; this interaction promotes the phosphorylation of CLNK. Interacts with BCAR1/CAS and NEDD9/HEF1. As to quaternary structure, (Microbial infection) Interacts with Epstein-Barr virus LMP2A. (Microbial infection) Interacts with Herpes virus saimiri tyrosine kinase interacting protein (Tip). Ubiquitinated by CBL, leading to its degradation. Ubiquitination is SH3-dependent. Post-translationally, autophosphorylated. Phosphorylated on tyrosine residues in response to KIT signaling. Phosphorylation at Tyr-397 is required for optimal activity. Phosphorylation at Tyr-508 inhibits kinase activity. Phosphorylated at Tyr-508 by CSK. Dephosphorylated by PTPRC/CD45. Becomes rapidly phosphorylated upon activation of the B-cell receptor and the immunoglobulin receptor FCGR1A. Phosphorylated in response to ITGB1 in B-cells. In terms of tissue distribution, detected in monocytes (at protein level). Detected in placenta, and in fetal brain, lung, liver and kidney. Widely expressed in a variety of organs, tissues, and cell types such as epidermoid, hematopoietic, and neuronal cells. Expressed in primary neuroblastoma tumors.

The protein resides in the cell membrane. Its subcellular location is the nucleus. The protein localises to the cytoplasm. It is found in the perinuclear region. It localises to the golgi apparatus. The protein resides in the membrane. The enzyme catalyses L-tyrosyl-[protein] + ATP = O-phospho-L-tyrosyl-[protein] + ADP + H(+). Its activity is regulated as follows. Subject to autoinhibition, mediated by intramolecular interactions between the SH2 domain and the C-terminal phosphotyrosine. Phosphorylation at Tyr-397 is required for optimal activity. Phosphorylated by CSK at Tyr-508; phosphorylation at Tyr-508 inhibits kinase activity. Kinase activity is modulated by dephosphorylation by PTPRC/CD45. Inhibited by Dasatinib, PP2, and SU6656. In terms of biological role, non-receptor tyrosine-protein kinase that transmits signals from cell surface receptors and plays an important role in the regulation of innate and adaptive immune responses, hematopoiesis, responses to growth factors and cytokines, integrin signaling, but also responses to DNA damage and genotoxic agents. Functions primarily as negative regulator, but can also function as activator, depending on the context. Required for the initiation of the B-cell response, but also for its down-regulation and termination. Plays an important role in the regulation of B-cell differentiation, proliferation, survival and apoptosis, and is important for immune self-tolerance. Acts downstream of several immune receptors, including the B-cell receptor, CD79A, CD79B, CD5, CD19, CD22, FCER1, FCGR2, FCGR1A, TLR2 and TLR4. Plays a role in the inflammatory response to bacterial lipopolysaccharide. Mediates the responses to cytokines and growth factors in hematopoietic progenitors, platelets, erythrocytes, and in mature myeloid cells, such as dendritic cells, neutrophils and eosinophils. Acts downstream of EPOR, KIT, MPL, the chemokine receptor CXCR4, as well as the receptors for IL3, IL5 and CSF2. Plays an important role in integrin signaling. Regulates cell proliferation, survival, differentiation, migration, adhesion, degranulation, and cytokine release. Involved in the regulation of endothelial activation, neutrophil adhesion and transendothelial migration. Down-regulates signaling pathways by phosphorylation of immunoreceptor tyrosine-based inhibitory motifs (ITIM), that then serve as binding sites for phosphatases, such as PTPN6/SHP-1, PTPN11/SHP-2 and INPP5D/SHIP-1, that modulate signaling by dephosphorylation of kinases and their substrates. Phosphorylates LIME1 in response to CD22 activation. Phosphorylates BTK, CBL, CD5, CD19, CD72, CD79A, CD79B, CSF2RB, DOK1, HCLS1, LILRB3/PIR-B, MS4A2/FCER1B, SYK and TEC. Promotes phosphorylation of SIRPA, PTPN6/SHP-1, PTPN11/SHP-2 and INPP5D/SHIP-1. Mediates phosphorylation of the BCR-ABL fusion protein. Required for rapid phosphorylation of FER in response to FCER1 activation. Mediates KIT phosphorylation. Acts as an effector of EPOR (erythropoietin receptor) in controlling KIT expression and may play a role in erythroid differentiation during the switch between proliferation and maturation. Depending on the context, activates or inhibits several signaling cascades. Regulates phosphatidylinositol 3-kinase activity and AKT1 activation. Regulates activation of the MAP kinase signaling cascade, including activation of MAP2K1/MEK1, MAPK1/ERK2, MAPK3/ERK1, MAPK8/JNK1 and MAPK9/JNK2. Mediates activation of STAT5A and/or STAT5B. Phosphorylates LPXN on 'Tyr-72'. Kinase activity facilitates TLR4-TLR6 heterodimerization and signal initiation. Phosphorylates SCIMP on 'Tyr-107'; this enhances binding of SCIMP to TLR4, promoting the phosphorylation of TLR4, and a selective cytokine response to lipopolysaccharide in macrophages. Phosphorylates CLNK. Phosphorylates BCAR1/CAS and NEDD9/HEF1. The protein is Tyrosine-protein kinase Lyn (LYN) of Homo sapiens (Human).